Here is a 4690-residue protein sequence, read N- to C-terminus: Nonribosomal peptide synthetase sidN (4690 aa).

The adenylation 1 stretch occupies residues 238-656; sequence ARVRENPGRI…LGRLSSDQIK (419 aa). The region spanning 779 to 856 is the Carrier 1 domain; the sequence is SSSIPMLQSV…DLDTKAQQAL (78 aa). Position 816 is an O-(pantetheine 4'-phosphoryl)serine (Ser816). Positions 925-1175 are condensation 1; it reads PGGKAFIQHT…AFGNTMSGRF (251 aa). Residues 1349–1760 are adenylation 2; it reads EFAQKSPNAI…GRKDDLVKIR (412 aa). The Carrier 2 domain occupies 1889–1965; sequence PAWCIKHRPL…DLINHLSVKR (77 aa). Position 1926 is an O-(pantetheine 4'-phosphoryl)serine (Ser1926). The segment at 2001–2285 is condensation 2; that stretch reads PTTVFQDGML…SERLLESQLV (285 aa). Residues 2464–2869 form an adenylation 3 region; it reads TWAKTHPEWK…GRKDEQVKVR (406 aa). Residues 3002–3079 form the Carrier 3 domain; the sequence is RDLTSIEKQI…ELGRMKNALK (78 aa). O-(pantetheine 4'-phosphoryl)serine is present on Ser3040. The interval 3121-3530 is condensation 3; it reads CMPLQEVLVA…QMESLVTSFT (410 aa). A Carrier 4 domain is found at 3564–3637; it reads SVLEQQIRDV…KLATHIQTTS (74 aa). Position 3598 is an O-(pantetheine 4'-phosphoryl)serine (Ser3598). A condensation 4 region spans residues 3679-4087; it reads VYPLTPLQAG…FESIRKHPDE (409 aa). One can recognise a Carrier 5 domain in the interval 4119–4195; it reads SAIDQFLDPL…KLCEVAFAKS (77 aa). Position 4156 is an O-(pantetheine 4'-phosphoryl)serine (Ser4156). Positions 4262–4589 are condensation 5; sequence WVFKAENGLD…FNAHLNILWN (328 aa).

It belongs to the NRP synthetase family.

It functions in the pathway siderophore biosynthesis. Its function is as follows. Nonribosomal peptide synthetase required for the biosynthetis of epichloenin A, an extracellular siderophore that plays a crucial role in endophyte-grass symbioses. SidN assembles epichloenin A by activating and incorporating three trans-anhydromevalonylhydroxyornithine (trans-AMHO), 1 glutamine and 4 glycine moieties. Trans-AMHO is produced from L-ornithine via 2 steps involving a L-ornithine N(5)-monooxygenase and an AHMO-N(5)-transacylase that have still to be identified. The third adenylation domain (A3) of sidN incorporates the hydroxamate groups of the siderophore which forms an octahedral iron complex. The other component amino acids are assembled by sidN adenylation domains A1 and A2. The chain is Nonribosomal peptide synthetase sidN from Epichloe festucae (strain E2368).